A 395-amino-acid chain; its full sequence is Na(+)/H(+) antiporter NhaA (395 aa).

11 helical membrane passes run Phe-11–Ile-31, Leu-61–Val-81, Ile-96–Phe-116, Gly-127–Gly-147, Leu-156–Phe-176, Gly-179–Met-199, Leu-215–Phe-237, Val-262–Val-282, Ile-295–Val-315, Val-334–Val-354, and Met-366–Ala-386.

Belongs to the NhaA Na(+)/H(+) (TC 2.A.33) antiporter family.

It localises to the cell inner membrane. It catalyses the reaction Na(+)(in) + 2 H(+)(out) = Na(+)(out) + 2 H(+)(in). Functionally, na(+)/H(+) antiporter that extrudes sodium in exchange for external protons. The protein is Na(+)/H(+) antiporter NhaA of Pseudomonas fluorescens (strain Pf0-1).